Reading from the N-terminus, the 624-residue chain is Bifunctional protein ArgH (624 aa).

The interval 1 to 466 (MALWGGRFSQ…QERDNAGVKV (466 aa)) is argininosuccinate lyase. The region spanning 464–614 (VKVRPARLTD…DEVALEVNLQ (151 aa)) is the N-acetyltransferase domain. Residues 467–624 (RPARLTDLDA…EQVIIKSSVA (158 aa)) form a probable acetyltransferase region.

This sequence in the N-terminal section; belongs to the lyase 1 family. Argininosuccinate lyase subfamily.

Its subcellular location is the cytoplasm. It catalyses the reaction 2-(N(omega)-L-arginino)succinate = fumarate + L-arginine. It participates in amino-acid biosynthesis; L-arginine biosynthesis; L-arginine from L-ornithine and carbamoyl phosphate: step 3/3. This is Bifunctional protein ArgH (argH) from Aliivibrio fischeri (strain ATCC 700601 / ES114) (Vibrio fischeri).